A 292-amino-acid polypeptide reads, in one-letter code: Seed lectin (292 aa).

Positions 1 to 37 (MATSNSRPHLLQTHKPFSVVLAISITFFLLLLNKVNS) are cleaved as a signal peptide. 2 N-linked (GlcNAc...) asparagine glycosylation sites follow: Asn-82 and Asn-154. Residues Asp-163 and Asp-165 each contribute to the Mn(2+) site. Residues Asp-165, His-167, Asn-169, and Asp-172 each coordinate Ca(2+). Mn(2+) contacts are provided by Asp-172 and His-177. The N-linked (GlcNAc...) asparagine glycan is linked to Asn-186.

This sequence belongs to the leguminous lectin family.

Functionally, mannose/glucose-specific lectin. This chain is Seed lectin, found in Styphnolobium japonicum (Japanese pagoda tree).